Here is a 172-residue protein sequence, read N- to C-terminus: Bcl-2-related protein A1 (172 aa).

Residues 77–97 carry the BH1 motif; sequence KEFEDGIINWGRIVTIFAFGG. Positions 132–147 match the BH2 motif; sequence EWIRQNGGWEDGFIKK.

Belongs to the Bcl-2 family. Interacts directly with BCL2L11/BIM and PMAIP1. Interacts directly with BAK1, BID, BMF and BBC3. Interacts with BOP. Interacts with isoform 3, isoform 4 and isoform 5 of ING4. Interacts with UBQLN4. Expressed in hemopoietic tissues, including bone marrow, spleen and thymus.

It is found in the cytoplasm. Retards apoptosis induced by IL-3 deprivation. May function in the response of hemopoietic cells to external signals and in maintaining endothelial survival during infection. Can inhibit apoptosis induced by serum starvation in the mammary epithelial cell line HC11. The sequence is that of Bcl-2-related protein A1 (Bcl2a1) from Mus musculus (Mouse).